A 316-amino-acid polypeptide reads, in one-letter code: Ribosomal RNA small subunit methyltransferase H (316 aa).

S-adenosyl-L-methionine contacts are provided by residues 37 to 39, aspartate 56, phenylalanine 83, aspartate 106, and histidine 113; that span reads GGH. The disordered stretch occupies residues 276 to 316; sequence PILPSEEETKENPASRSAKLRVLRKTKSADKKYKKENSKEE. Over residues 302 to 316 the composition is skewed to basic and acidic residues; sequence KSADKKYKKENSKEE.

It belongs to the methyltransferase superfamily. RsmH family.

The protein resides in the cytoplasm. The catalysed reaction is cytidine(1402) in 16S rRNA + S-adenosyl-L-methionine = N(4)-methylcytidine(1402) in 16S rRNA + S-adenosyl-L-homocysteine + H(+). Functionally, specifically methylates the N4 position of cytidine in position 1402 (C1402) of 16S rRNA. The sequence is that of Ribosomal RNA small subunit methyltransferase H from Leptospira borgpetersenii serovar Hardjo-bovis (strain L550).